The sequence spans 115 residues: NAD(P)H-quinone oxidoreductase subunit M, organellar chromatophore (115 aa).

It belongs to the complex I NdhM subunit family. As to quaternary structure, NDH-1 can be composed of about 15 different subunits; different subcomplexes with different compositions have been identified which probably have different functions.

Its subcellular location is the plastid. The protein resides in the organellar chromatophore thylakoid membrane. The enzyme catalyses a plastoquinone + NADH + (n+1) H(+)(in) = a plastoquinol + NAD(+) + n H(+)(out). The catalysed reaction is a plastoquinone + NADPH + (n+1) H(+)(in) = a plastoquinol + NADP(+) + n H(+)(out). Its function is as follows. NDH-1 shuttles electrons from an unknown electron donor, via FMN and iron-sulfur (Fe-S) centers, to quinones in the respiratory and/or the photosynthetic chain. The immediate electron acceptor for the enzyme in this species is believed to be plastoquinone. Couples the redox reaction to proton translocation, and thus conserves the redox energy in a proton gradient. The protein is NAD(P)H-quinone oxidoreductase subunit M, organellar chromatophore of Paulinella chromatophora.